A 550-amino-acid polypeptide reads, in one-letter code: Luciferin 4-monooxygenase (550 aa).

Residues 548–550 (SKL) carry the Microbody targeting signal motif.

It belongs to the ATP-dependent AMP-binding enzyme family. It depends on Mg(2+) as a cofactor.

The protein localises to the peroxisome. The catalysed reaction is firefly D-luciferin + ATP + O2 = firefly oxyluciferin + hnu + AMP + CO2 + diphosphate. Functionally, produces green light with a wavelength of 562 nm. The protein is Luciferin 4-monooxygenase of Photinus pyralis (Common eastern firefly).